Reading from the N-terminus, the 302-residue chain is Rab effector Noc2 (302 aa).

The RabBD domain maps to 41-158 (QRRTQCLSPG…KRSGAWFYKG (118 aa)). Residues 89-146 (GNGVSQCLLCGEMLGFLGSSSVFCKDCRKKVCTKCGIEASPGQKRPLWLCKICSEQRE) form an FYVE-type zinc finger. Positions 95, 98, 112, 115, 120, 123, 138, and 141 each coordinate Zn(2+). Disordered regions lie at residues 174 to 194 (DPHF…SAEV) and 206 to 302 (VSSD…TTHY). Serine 248 is modified (phosphoserine). The segment covering 258 to 269 (SHLSGSQSSLGS) has biased composition (low complexity).

Recruited to dense-core vesicles through specific interaction with RAB27A in endocrine cells. Interacts with RAB3A, RAB3B, RAB3C and RAB3D. Interacts with ZYX. In terms of tissue distribution, highly expressed in pancreatic islets and parotid. High to moderate expression in adrenal gland, pituitary gland and ovary.

Its subcellular location is the cytoplasm. It is found in the cytoplasmic vesicle. The protein resides in the secretory vesicle membrane. Its function is as follows. Rab GTPase effector involved in the late steps of regulated exocytosis, both in endocrine and exocrine cells. Regulates the exocytosis of dense-core vesicles in neuroendocrine cells through interaction with RAB27A. Acts as a potential RAB3B effector protein in epithelial cells. This is Rab effector Noc2 (Rph3al) from Rattus norvegicus (Rat).